A 347-amino-acid chain; its full sequence is Transcription factor EC (347 aa).

A necessary for transcriptional transactivation region spans residues 1–119; the sequence is MTLDHQIINP…GLTSASCPSS (119 aa). The region spanning 139 to 192 is the bHLH domain; that stretch reads QKKDNHNLIERRRRYNINYRIKELGTLIPKSNDPDMRWNKGTILKASVEYIKWL. The segment at 271–347 is necessary for transcriptional transactivation; the sequence is PSPELCDQAI…SFSSDDGDEL (77 aa). The segment at 319 to 347 is disordered; the sequence is DPLLSATSPAVSKESSRRSSFSSDDGDEL. The segment covering 326–341 has biased composition (low complexity); it reads SPAVSKESSRRSSFSS.

It belongs to the MiT/TFE family. Homodimer. Forms heterodimers with TFE3. Forms heterodimers with MITF. Interacts with MITF. As to expression, expressed moderately in spleen, kidney, bone marrow, small intestine and leukocytes. Expressed weakly in testis, trachea and colon.

It localises to the nucleus. In terms of biological role, transcriptional regulator that acts as a repressor or an activator. Acts as a transcriptional repressor on minimal promoter containing element F (that includes an E-box sequence). Binds to element F in an E-box sequence-specific manner. Acts as a transcriptional transactivator on the proximal promoter region of the tartrate-resistant acid phosphatase (TRAP) E-box containing promoter. Collaborates with MITF in target gene activation. Acts as a transcriptional repressor on minimal promoter containing mu E3 enhancer sequence. Binds to mu E3 DNA sequence of the immunoglobulin heavy-chain gene enhancer. Binds DNA in a homo- or heterodimeric form. The protein is Transcription factor EC (TFEC) of Homo sapiens (Human).